The chain runs to 199 residues: DnaJ homolog subfamily C member 5B (199 aa).

Residue S14 is modified to Phosphoserine. In terms of domain architecture, J spans 19-84 (ALYEILGLHK…SKRSIYDKYG (66 aa)).

As to quaternary structure, interacts with the chaperone complex consisting of HSC70 and SGTA. Post-translationally, palmitoylated. Palmitoylation is not required for membrane association. In terms of tissue distribution, testis specific.

The protein resides in the membrane. In Homo sapiens (Human), this protein is DnaJ homolog subfamily C member 5B (DNAJC5B).